A 417-amino-acid chain; its full sequence is UPF0761 membrane protein Daci_4966 (417 aa).

6 consecutive transmembrane segments (helical) span residues 49-69, 106-126, 146-166, 187-207, 235-255, and 256-276; these read VLALVPFFTVALALFTAFPIF, QLGMAGFSILVITAVALILTI, VLIYWAAITLGPLVLGLSLVL, FIFDSIEYLALAAGMAGLYHY, ALGLYLASVPTYSVIYGTFAT, and LPILLIWIYMAWIIVLLGAVV.

The protein belongs to the UPF0761 family.

The protein localises to the cell inner membrane. The sequence is that of UPF0761 membrane protein Daci_4966 from Delftia acidovorans (strain DSM 14801 / SPH-1).